The sequence spans 397 residues: MTERVVLAYSGGLDTSVAIGWIAEETGAEVIAVAVDVGQGGEDLDVIRKRALACGAVEAEVADARDEFAEEYCLPAIKANALYMDRYPLVSALSRPTIVKHLVAAARKHGAGTVAHGCTGKGNDQVRFEAGISALGPDLKCIAPVRDYAMTRDRAIAFCEEKNLPIATTRKSPYSIDQNVFGRAVETGFLEDIWNAPIEDIYEYTADPAVPREADEVVISFKEGVPVAVDGRPVTVLQAIQQLNERAGAQGVGRIDMVEDRLVGIKSREVYEAPGAIALITAHQELENVTVERELARYKRQVEQRWGEMVYDGLWFSPLKRALDGFINEANQHVTGDIRMTLHAGRAVVTGRKSEESLYDFNLATYDSGDTFDQSKAQGFIEIFGLSAKIAARRDLA.

8 to 16 serves as a coordination point for ATP; the sequence is AYSGGLDTS. Y87 lines the L-citrulline pocket. An ATP-binding site is contributed by G117. L-aspartate is bound by residues T119, N123, and D124. N123 is a binding site for L-citrulline. 4 residues coordinate L-citrulline: R127, S175, E259, and Y271.

The protein belongs to the argininosuccinate synthase family. Type 1 subfamily. In terms of assembly, homotetramer.

The protein localises to the cytoplasm. It carries out the reaction L-citrulline + L-aspartate + ATP = 2-(N(omega)-L-arginino)succinate + AMP + diphosphate + H(+). It participates in amino-acid biosynthesis; L-arginine biosynthesis; L-arginine from L-ornithine and carbamoyl phosphate: step 2/3. The sequence is that of Argininosuccinate synthase from Streptomyces griseus subsp. griseus (strain JCM 4626 / CBS 651.72 / NBRC 13350 / KCC S-0626 / ISP 5235).